The sequence spans 259 residues: Aspartate/glutamate leucyltransferase (259 aa).

The protein belongs to the R-transferase family. Bpt subfamily.

The protein localises to the cytoplasm. It carries out the reaction N-terminal L-glutamyl-[protein] + L-leucyl-tRNA(Leu) = N-terminal L-leucyl-L-glutamyl-[protein] + tRNA(Leu) + H(+). The catalysed reaction is N-terminal L-aspartyl-[protein] + L-leucyl-tRNA(Leu) = N-terminal L-leucyl-L-aspartyl-[protein] + tRNA(Leu) + H(+). In terms of biological role, functions in the N-end rule pathway of protein degradation where it conjugates Leu from its aminoacyl-tRNA to the N-termini of proteins containing an N-terminal aspartate or glutamate. This is Aspartate/glutamate leucyltransferase from Sinorhizobium medicae (strain WSM419) (Ensifer medicae).